Consider the following 443-residue polypeptide: Threonine/serine transporter TdcC (443 aa).

Helical transmembrane passes span 22–42 (TTWTLGLFGTAIGAGVLFFPI), 44–64 (AGFGGLIPILLMLVLAYPIAF), 97–117 (GVVITFLYFFAICPLLWIYGV), 140–160 (FVALFLLLLMAFVIWFGKDLM), 163–183 (VMSYLVWPFIASLVLISLSLI), 207–227 (ILVTVWLGISIMVFSFNFSPI), 261–281 (MLMVAVVMFFAFSCLFTLSPA), 319–339 (ASIIALVAIFKSFFGHYLGTL), 366–386 (ISMIFIMGSTWVVAYANPNIL), 389–409 (IEAMGAPIIASLLCLLPMYAI), and 423–443 (DNVFVTVIGLLTILNIVYKLF).

The protein belongs to the amino acid/polyamine transporter 2 family. SdaC/TdcC subfamily.

Its subcellular location is the cell inner membrane. It carries out the reaction L-threonine(in) + H(+)(in) = L-threonine(out) + H(+)(out). The enzyme catalyses L-serine(in) + H(+)(in) = L-serine(out) + H(+)(out). In terms of biological role, involved in the import of threonine and serine into the cell, with the concomitant import of a proton (symport system). This chain is Threonine/serine transporter TdcC, found in Citrobacter koseri (strain ATCC BAA-895 / CDC 4225-83 / SGSC4696).